The sequence spans 295 residues: MLKPFVSITKPGIIFGNLISVAGGFFLASQGSVDGGLFLATVIGIALVIASGCVFNNYIDRDIDRLMERTQGRVTVQGLIPPGVTLAYGGVLGVAGFSVLWFGTNALATAFALLGFVVYVGLYSLYLKRHSIYGTLVGSLSGAAPPVVGYCAVSGQFDLGALTLLLIFCLWQMPHSYAIAIFRFHDYRAASIPVLPVERGVRAAKHHIFWYILAFLGATLMLTLGGYAGYGYFAVAAAMGLYWLVMALRGYRAGDDQVWAKKVFIFSIFTITALSIMMSIDFQVTETEVLMTSLR.

9 helical membrane-spanning segments follow: residues 8-28, 35-55, 83-103, 107-127, 132-152, 162-182, 208-228, 229-249, and 263-283; these read ITKP…FFLA, GGLF…GCVF, GVTL…LWFG, LATA…SLYL, IYGT…GYCA, LTLL…IAIF, IFWY…GGYA, GYGY…MALR, and VFIF…IDFQ.

It belongs to the UbiA prenyltransferase family. Protoheme IX farnesyltransferase subfamily.

The protein localises to the cell inner membrane. The catalysed reaction is heme b + (2E,6E)-farnesyl diphosphate + H2O = Fe(II)-heme o + diphosphate. The protein operates within porphyrin-containing compound metabolism; heme O biosynthesis; heme O from protoheme: step 1/1. Its function is as follows. Converts heme B (protoheme IX) to heme O by substitution of the vinyl group on carbon 2 of heme B porphyrin ring with a hydroxyethyl farnesyl side group. The sequence is that of Protoheme IX farnesyltransferase from Chromohalobacter salexigens (strain ATCC BAA-138 / DSM 3043 / CIP 106854 / NCIMB 13768 / 1H11).